A 266-amino-acid chain; its full sequence is ES1 protein homolog, mitochondrial (266 aa).

The N-terminal 39 residues, 1–39, are a transit peptide targeting the mitochondrion; the sequence is MAAVRVLVSPRLASALLPLSGRHRTTSQRAAIHSSAPRP. An N6-acetyllysine mark is found at lysine 149, lysine 155, and lysine 162. Lysine 201 is modified (N6-acetyllysine; alternate). Residue lysine 201 is modified to N6-succinyllysine; alternate. The residue at position 217 (lysine 217) is an N6-acetyllysine. N6-acetyllysine; alternate occurs at positions 221 and 231. Residues lysine 221 and lysine 231 each carry the N6-succinyllysine; alternate modification.

The protein belongs to the ES1 family.

The protein localises to the mitochondrion. This is ES1 protein homolog, mitochondrial from Rattus norvegicus (Rat).